The following is a 373-amino-acid chain: Probable G-protein coupled receptor 173 (373 aa).

Residues Met1–Leu26 are Extracellular-facing. N-linked (GlcNAc...) asparagine glycosylation occurs at Asn3. The chain crosses the membrane as a helical span at residues Val27–Val47. The Cytoplasmic segment spans residues Leu48–Tyr59. Residues Phe60–Leu80 form a helical membrane-spanning segment. Over Ala81 to Lys97 the chain is Extracellular. Residues Cys96 and Cys174 are joined by a disulfide bond. A helical membrane pass occupies residues Ile98–Ser118. Topologically, residues Val119 to Thr139 are cytoplasmic. The chain crosses the membrane as a helical span at residues Cys140 to Phe160. Topologically, residues Asp161 to Gly188 are extracellular. A glycan (N-linked (GlcNAc...) asparagine) is linked at Asn184. Residues Phe189–Leu209 traverse the membrane as a helical segment. Topologically, residues Phe210–Met287 are cytoplasmic. The helical transmembrane segment at Phe288–Trp308 threads the bilayer. Residues Arg309 to Leu322 lie on the Extracellular side of the membrane. A helical transmembrane segment spans residues Ala323–Leu343. Over Asn344–Met373 the chain is Cytoplasmic.

It belongs to the G-protein coupled receptor 1 family.

It localises to the cell membrane. Its function is as follows. Is a receptor for the SMIM20 derived peptides Phoenixin-14 and Phoenixin-20. It mediates the Phoenixin-14 and Phoenixin-20 augmentation of gonadotropin-releasing hormone (GNRH) signaling in the hypothalamus and pituitary gland. In the ovary, it mediates the effects of Phoenixin-14 and Phoenixin-20 induced granulosa cell proliferation during follicular growth. The sequence is that of Probable G-protein coupled receptor 173 (GPR173) from Bos taurus (Bovine).